The following is a 259-amino-acid chain: Hemin import ATP-binding protein HmuV (259 aa).

The ABC transporter domain occupies 6–242; sequence IQGRDLCVTY…ERIEQVYGYQ (237 aa). 38-45 provides a ligand contact to ATP; that stretch reads GPNGAGKS.

Belongs to the ABC transporter superfamily. Heme (hemin) importer (TC 3.A.1.14.5) family. The complex is composed of two ATP-binding proteins (HmuV), two transmembrane proteins (HmuU) and a solute-binding protein (HmuT).

It is found in the cell inner membrane. Part of the ABC transporter complex HmuTUV involved in hemin import. Responsible for energy coupling to the transport system. The sequence is that of Hemin import ATP-binding protein HmuV from Vibrio cholerae serotype O1 (strain ATCC 39315 / El Tor Inaba N16961).